Reading from the N-terminus, the 469-residue chain is Argininosuccinate lyase (469 aa).

It belongs to the lyase 1 family. Argininosuccinate lyase subfamily.

It is found in the cytoplasm. The enzyme catalyses 2-(N(omega)-L-arginino)succinate = fumarate + L-arginine. It participates in amino-acid biosynthesis; L-arginine biosynthesis; L-arginine from L-ornithine and carbamoyl phosphate: step 3/3. In Burkholderia orbicola (strain MC0-3), this protein is Argininosuccinate lyase.